Reading from the N-terminus, the 393-residue chain is 5-azacytidine-induced protein 2 (393 aa).

Residues 1-198 (MDALVEDDIC…IELQKAKQTD (198 aa)) are homodimerization. The stretch at 40–198 (ALVTAYEDIK…IELQKAKQTD (159 aa)) forms a coiled coil. Positions 217 to 258 (SDNMQSAYWELKREMSNLHLVTQVQAELLRKLKTPAAIKKAC) are interaction with TBK1 and IKBKE. Phosphoserine is present on S319. 2 disordered regions span residues 321 to 340 (TDHE…HNSY) and 345 to 393 (LEDN…HYKH). S354 is modified (phosphoserine). Residues 384-393 (QHNQNCHYKH) show a composition bias toward polar residues.

As to quaternary structure, homodimer. Interacts with IKBKE, TBK1 and TICAM1. Interacts with TAX1BP1. Interacts with CALCOCO2. In terms of processing, ubiquitinated via 'Lys-48'-linked polyubiquitination by TRIM38, leading to its degradation.

The protein localises to the cytoplasm. In terms of biological role, adapter protein which binds TBK1 and IKBKE playing a role in antiviral innate immunity. Activates serine/threonine-protein kinase TBK1 and facilitates its oligomerization. Enhances the phosphorylation of NF-kappa-B p65 subunit RELA by TBK1. Promotes TBK1-induced as well as TNF-alpha or PMA-induced activation of NF-kappa-B. Participates in IFNB promoter activation via TICAM1. This chain is 5-azacytidine-induced protein 2 (AZI2), found in Bos taurus (Bovine).